A 298-amino-acid polypeptide reads, in one-letter code: 4-hydroxy-3-methylbut-2-enyl diphosphate reductase (298 aa).

Position 12 (Cys12) interacts with [4Fe-4S] cluster. (2E)-4-hydroxy-3-methylbut-2-enyl diphosphate-binding residues include His40 and His78. The dimethylallyl diphosphate site is built by His40 and His78. The isopentenyl diphosphate site is built by His40 and His78. Cys100 is a binding site for [4Fe-4S] cluster. His128 serves as a coordination point for (2E)-4-hydroxy-3-methylbut-2-enyl diphosphate. His128 contacts dimethylallyl diphosphate. His128 lines the isopentenyl diphosphate pocket. The Proton donor role is filled by Glu130. Residue Thr171 participates in (2E)-4-hydroxy-3-methylbut-2-enyl diphosphate binding. Cys200 provides a ligand contact to [4Fe-4S] cluster. Residues Ser228, Ser229, Asn230, and Ser270 each contribute to the (2E)-4-hydroxy-3-methylbut-2-enyl diphosphate site. Dimethylallyl diphosphate is bound by residues Ser228, Ser229, Asn230, and Ser270. Isopentenyl diphosphate contacts are provided by Ser228, Ser229, Asn230, and Ser270.

The protein belongs to the IspH family. The cofactor is [4Fe-4S] cluster.

The catalysed reaction is isopentenyl diphosphate + 2 oxidized [2Fe-2S]-[ferredoxin] + H2O = (2E)-4-hydroxy-3-methylbut-2-enyl diphosphate + 2 reduced [2Fe-2S]-[ferredoxin] + 2 H(+). It carries out the reaction dimethylallyl diphosphate + 2 oxidized [2Fe-2S]-[ferredoxin] + H2O = (2E)-4-hydroxy-3-methylbut-2-enyl diphosphate + 2 reduced [2Fe-2S]-[ferredoxin] + 2 H(+). The protein operates within isoprenoid biosynthesis; dimethylallyl diphosphate biosynthesis; dimethylallyl diphosphate from (2E)-4-hydroxy-3-methylbutenyl diphosphate: step 1/1. It functions in the pathway isoprenoid biosynthesis; isopentenyl diphosphate biosynthesis via DXP pathway; isopentenyl diphosphate from 1-deoxy-D-xylulose 5-phosphate: step 6/6. Catalyzes the conversion of 1-hydroxy-2-methyl-2-(E)-butenyl 4-diphosphate (HMBPP) into a mixture of isopentenyl diphosphate (IPP) and dimethylallyl diphosphate (DMAPP). Acts in the terminal step of the DOXP/MEP pathway for isoprenoid precursor biosynthesis. This Kosmotoga olearia (strain ATCC BAA-1733 / DSM 21960 / TBF 19.5.1) protein is 4-hydroxy-3-methylbut-2-enyl diphosphate reductase.